Reading from the N-terminus, the 291-residue chain is Acetyl-coenzyme A carboxylase carboxyl transferase subunit beta (291 aa).

One can recognise a CoA carboxyltransferase N-terminal domain in the interval 29 to 291 (LWSKCPECGE…MHQQPAAVSA (263 aa)). Cys33, Cys36, Cys52, and Cys55 together coordinate Zn(2+). The C4-type zinc finger occupies 33–55 (CPECGEVVYRKDLIANASVCASC).

This sequence belongs to the AccD/PCCB family. In terms of assembly, acetyl-CoA carboxylase is a heterohexamer composed of biotin carboxyl carrier protein (AccB), biotin carboxylase (AccC) and two subunits each of ACCase subunit alpha (AccA) and ACCase subunit beta (AccD). The cofactor is Zn(2+).

The protein localises to the cytoplasm. The enzyme catalyses N(6)-carboxybiotinyl-L-lysyl-[protein] + acetyl-CoA = N(6)-biotinyl-L-lysyl-[protein] + malonyl-CoA. The protein operates within lipid metabolism; malonyl-CoA biosynthesis; malonyl-CoA from acetyl-CoA: step 1/1. Component of the acetyl coenzyme A carboxylase (ACC) complex. Biotin carboxylase (BC) catalyzes the carboxylation of biotin on its carrier protein (BCCP) and then the CO(2) group is transferred by the transcarboxylase to acetyl-CoA to form malonyl-CoA. This is Acetyl-coenzyme A carboxylase carboxyl transferase subunit beta from Synechococcus sp. (strain RCC307).